We begin with the raw amino-acid sequence, 875 residues long: Alanine--tRNA ligase (875 aa).

Positions 563, 567, 665, and 669 each coordinate Zn(2+).

The protein belongs to the class-II aminoacyl-tRNA synthetase family. Zn(2+) is required as a cofactor.

Its subcellular location is the cytoplasm. The enzyme catalyses tRNA(Ala) + L-alanine + ATP = L-alanyl-tRNA(Ala) + AMP + diphosphate. Functionally, catalyzes the attachment of alanine to tRNA(Ala) in a two-step reaction: alanine is first activated by ATP to form Ala-AMP and then transferred to the acceptor end of tRNA(Ala). Also edits incorrectly charged Ser-tRNA(Ala) and Gly-tRNA(Ala) via its editing domain. The sequence is that of Alanine--tRNA ligase from Shewanella pealeana (strain ATCC 700345 / ANG-SQ1).